A 281-amino-acid chain; its full sequence is MSGVTAIEIPQWIQDNQEDFVPPVCNKCMFSDQLKVFYVGGPNQRKDFHLEEGEEFFFQRKGDMVLKVIEKGQVRDLVIKQGEMFMLPARVEHSPQRFSNSIGLVVERERKNTEFDCVRFLVGSSNITLFERWFYLTDVVKDLPPLIKEFYGSNEFKTGKPGKGTFACNAPYEARWTDLPVPINRKEFIYDHISEVKNGPVRIYGAPEYKTEVMLLGEGSYDLESGTVELLIWLQENTFAVVEESGFTYAMKSETMVRIKPNTKCLLNVKGGFAITIRMPA.

The segment at 1–162 (MSGVTAIEIP…SNEFKTGKPG (162 aa)) is domain A (catalytic). R45 is a binding site for O2. Fe cation-binding residues include H49, E55, and H93. E55 provides a ligand contact to substrate. Positions 97 and 107 each coordinate substrate. The linker stretch occupies residues 163 to 179 (KGTFACNAPYEARWTDL). The interval 180–281 (PVPINRKEFI…GFAITIRMPA (102 aa)) is domain B.

This sequence belongs to the 3-HAO family. Requires Fe(2+) as cofactor.

It localises to the cytoplasm. It catalyses the reaction 3-hydroxyanthranilate + O2 = (2Z,4Z)-2-amino-3-carboxymuconate 6-semialdehyde. It participates in cofactor biosynthesis; NAD(+) biosynthesis; quinolinate from L-kynurenine: step 3/3. Functionally, catalyzes the oxidative ring opening of 3-hydroxyanthranilate to 2-amino-3-carboxymuconate semialdehyde, which spontaneously cyclizes to quinolinate. This chain is 3-hydroxyanthranilate 3,4-dioxygenase (haao-1), found in Caenorhabditis elegans.